Here is a 192-residue protein sequence, read N- to C-terminus: Cytochrome b-245 light chain (192 aa).

Residues 2–7 (GQIEWA) are Cytoplasmic-facing. A helical transmembrane segment spans residues 8 to 30 (MWANEQALASGLILMTGGIVATA). The Extracellular segment spans residues 31–35 (GQFTQ). A helical membrane pass occupies residues 36 to 53 (WYLGTYSIAAGVLVCLLE). The Cytoplasmic portion of the chain corresponds to 54-69 (YPRGRRTKGSTMERCE). Residues 70-80 (QKYMTKVVKAF) lie within the membrane without spanning it. Over 81 to 86 (GPLSRN) the chain is Cytoplasmic. Residues 87–104 (YYIRAFLHLGLSVPAGFL) traverse the membrane as a helical segment. L105 is a topological domain (extracellular). The helical transmembrane segment at 106–126 (ATILGTACLAIASGIYLLAAI) threads the bilayer. At 127 to 192 (RGEQWTPIEP…TPCPVTDEVV (66 aa)) the chain is on the cytoplasmic side. A disordered region spans residues 134–192 (IEPKPKERPQVGGTIKQPPSNPPPRPPPEARKKPGEEAVAGVPRGAPRKTPCPVTDEVV). Phosphothreonine is present on T147. Residue K149 forms a Glycyl lysine isopeptide (Lys-Gly) (interchain with G-Cter in ubiquitin) linkage.

Belongs to the p22phox family. Component of the phagocyte NADPH oxidase core complex/cytochrome b558 complex, composed of CYBB (heavy chain (beta)) and CYBA (light chain (alpha)). Component of the phagocyte NADPH oxidase complex composed of an obligatory core heterodimer formed by the membrane proteins CYBA and CYBB and the cytosolic regulatory subunits NCF1/p47-phox, NCF2/p67-phox, NCF4/p40-phox and the small GTPase RAC1 or RAC2. Interacts with NCF1 (via SH3 domain). Interacts with SH3PXD2A. Interacts with DUOX1, DUOX2 and TPO. Interacts with NOX4; this interaction mediates superoxide generation. Interacts with calprotectin (S100A8/9). Interacts with GBP7. Interacts with NOXO1. Forms a heterodimer with NOX3 and is essential for activity and cell membrane localization of NOX3. Interacts with NOX1. Phosphorylation at Thr-147 enhances NADPH oxidase activity by promoting NCF1/p47-phox binding. In terms of processing, ubiquitinated at Lys-149 likely by RNF145.

It is found in the cell membrane. Subunit of NADPH oxidase complexes that is required for the NADPH oxidase activity that generates, in various cell types, superoxide from molecular oxygen utilizing NADPH as an electron donor. Subunit of the phagocyte NADPH oxidase complex that mediates the transfer of electrons from cytosolic NADPH to O2 to produce the superoxide anion (O2(-)). In the activated complex, electrons are first transferred from NADPH to flavin adenine dinucleotide (FAD) and subsequently transferred via two heme molecules to molecular oxygen, producing superoxide through an outer-sphere reaction. Activation of the NADPH oxidase complex is initiated by the assembly of cytosolic subunits of the NADPH oxidase complex with the core NADPH oxidase complex to form a complex at the plasma membrane or phagosomal membrane. This activation process is initiated by phosphorylation dependent binding of the cytosolic NCF1/p47-phox subunit to the C-terminus of CYBA/p22-phox. Aassociates with NOX3 to form a functional NADPH oxidase constitutively generating superoxide. This is Cytochrome b-245 light chain from Sus scrofa (Pig).